A 194-amino-acid polypeptide reads, in one-letter code: Segregation and condensation protein B (194 aa).

It belongs to the ScpB family. In terms of assembly, homodimer. Homodimerization may be required to stabilize the binding of ScpA to the Smc head domains. Component of a cohesin-like complex composed of ScpA, ScpB and the Smc homodimer, in which ScpA and ScpB bind to the head domain of Smc. The presence of the three proteins is required for the association of the complex with DNA.

The protein localises to the cytoplasm. Its function is as follows. Participates in chromosomal partition during cell division. May act via the formation of a condensin-like complex containing Smc and ScpA that pull DNA away from mid-cell into both cell halves. The polypeptide is Segregation and condensation protein B (Brevibacillus brevis (strain 47 / JCM 6285 / NBRC 100599)).